A 289-amino-acid polypeptide reads, in one-letter code: 26S proteasome non-ATPase regulatory subunit 8 (289 aa).

Phosphoserine is present on Ser-45. In terms of domain architecture, PCI spans 101 to 270; sequence PSFERYMAQL…QQKPEDTTIP (170 aa). Residue Lys-236 forms a Glycyl lysine isopeptide (Lys-Gly) (interchain with G-Cter in SUMO2) linkage.

This sequence belongs to the proteasome subunit S14 family. In terms of assembly, component of the 19S proteasome regulatory particle complex. The 26S proteasome consists of a 20S core particle (CP) and two 19S regulatory subunits (RP). The regulatory particle is made of a lid composed of 9 subunits including PSMD8, a base containing 6 ATPases and few additional components. Interacts with DDI2. Interacts with TASOR.

Component of the 26S proteasome, a multiprotein complex involved in the ATP-dependent degradation of ubiquitinated proteins. This complex plays a key role in the maintenance of protein homeostasis by removing misfolded or damaged proteins, which could impair cellular functions, and by removing proteins whose functions are no longer required. Therefore, the proteasome participates in numerous cellular processes, including cell cycle progression, apoptosis, or DNA damage repair. This Pongo abelii (Sumatran orangutan) protein is 26S proteasome non-ATPase regulatory subunit 8 (PSMD8).